A 391-amino-acid polypeptide reads, in one-letter code: Zinc finger protein ubi-d4 (391 aa).

Ala-2 carries the post-translational modification N-acetylalanine. Residues Lys-10, Lys-99, Lys-107, and Lys-108 each participate in a glycyl lysine isopeptide (Lys-Gly) (interchain with G-Cter in SUMO2) cross-link. Disordered stretches follow at residues 79 to 146 (WRKK…LGEF) and 165 to 196 (DDLDDEDYEEDTPKRRGKGKSKGKGVGSARKK). Basic and acidic residues-rich tracts occupy residues 100–110 (PDTDQTLKKEG) and 126–140 (DPLEKRGAPDPRVDD). At Ser-142 the chain carries Phosphoserine. The span at 165–174 (DDLDDEDYEE) shows a compositional bias: acidic residues. A Phosphotyrosine modification is found at Tyr-172. Thr-176 carries the phosphothreonine modification. Glycyl lysine isopeptide (Lys-Gly) (interchain with G-Cter in SUMO2) cross-links involve residues Lys-178 and Lys-196. A Phosphoserine modification is found at Ser-200. The C2H2-type zinc finger occupies 209–232 (YACDICGKRYKNRPGLSYHYAHSH). A disordered region spans residues 233–266 (LAEEEGEDKEDSQPPTPVSQRSEEQKSKKGPDGL). Residue Ser-244 is modified to Phosphoserine. The segment covering 253-263 (RSEEQKSKKGP) has biased composition (basic and acidic residues). PHD-type zinc fingers lie at residues 270 to 330 (NNYC…CKCC) and 327 to 377 (CKCC…CLDL). Ser-280 is subject to Phosphoserine. A Glycyl lysine isopeptide (Lys-Gly) (interchain with G-Cter in SUMO2) cross-link involves residue Lys-281.

This sequence belongs to the requiem/DPF family. Interacts with the nucleosomes, in particular nucleosomes bearing histone H3 crotonylated at 'Lys-14' (H3K14cr) for which DPF2 has high affinity. Also interacts (via PHD-type zinc finger domains) with histone H3 butyrylated at 'Lys-14' (H3K14bu), histone H3 propionylated at 'Lys-14' (H3K14pr), and histone H3 acetylated at 'Lys-14' (H3K14ac). Interacts with histone H3 acetylated at 'Lys-9' (H3K9ac), histone H3 di-methylated at 'Lys-9' (H3K9me2), and histone H3 tri-methylated at 'Lys-9' (H3K9me3). Interacts with histone H4 acetylated at 'Lys-12' (H4K12ac). Interacts with histone H4 acetylated at 'Lys-16' (H4K16ac). Interacts with SWI/SNF complex components. Interacts with SMARCA2, SMARCA4, SMARCB1 and SMARCD1. Interacts with SMARCC1, SMARCC2 and ACTL6A. Interacts with RUNX1. Ubiquitous.

The protein localises to the nucleus. Its subcellular location is the cytoplasm. Plays an active role in transcriptional regulation by binding modified histones H3 and H4. Is a negative regulator of myeloid differentiation of hematopoietic progenitor cells. Might also have a role in the development and maturation of lymphoid cells. Involved in the regulation of non-canonical NF-kappa-B pathway. This is Zinc finger protein ubi-d4 (DPF2) from Homo sapiens (Human).